The sequence spans 400 residues: Phosphoglycerate kinase (400 aa).

Residues Asp-22–Asn-24, Arg-38, His-61–Arg-64, Arg-119, and Arg-152 contribute to the substrate site. Residues Lys-205, Gly-296, Glu-327, and Gly-353–Thr-356 each bind ATP.

The protein belongs to the phosphoglycerate kinase family. In terms of assembly, monomer.

Its subcellular location is the cytoplasm. The enzyme catalyses (2R)-3-phosphoglycerate + ATP = (2R)-3-phospho-glyceroyl phosphate + ADP. It functions in the pathway carbohydrate degradation; glycolysis; pyruvate from D-glyceraldehyde 3-phosphate: step 2/5. The protein is Phosphoglycerate kinase of Campylobacter jejuni subsp. jejuni serotype O:23/36 (strain 81-176).